The primary structure comprises 337 residues: Holliday junction branch migration complex subunit RuvB (337 aa).

Residues 1 to 179 are large ATPase domain (RuvB-L); it reads MTHQVAVLHQ…FAFSARLSYY (179 aa). Residues leucine 18, arginine 19, glycine 60, lysine 63, threonine 64, serine 65, 126–128, arginine 169, tyrosine 179, and arginine 216 contribute to the ATP site; that span reads EDF. Mg(2+) is bound at residue threonine 64. The interval 180–250 is small ATPAse domain (RuvB-S); the sequence is SDQDLKEILV…VAEKALAMLL (71 aa). Residues 253 to 337 form a head domain (RuvB-H) region; sequence DWGLNEIDIK…KNLLSLGEGQ (85 aa). Lysine 308 and arginine 313 together coordinate DNA.

It belongs to the RuvB family. Homohexamer. Forms an RuvA(8)-RuvB(12)-Holliday junction (HJ) complex. HJ DNA is sandwiched between 2 RuvA tetramers; dsDNA enters through RuvA and exits via RuvB. An RuvB hexamer assembles on each DNA strand where it exits the tetramer. Each RuvB hexamer is contacted by two RuvA subunits (via domain III) on 2 adjacent RuvB subunits; this complex drives branch migration. In the full resolvosome a probable DNA-RuvA(4)-RuvB(12)-RuvC(2) complex forms which resolves the HJ.

Its subcellular location is the cytoplasm. The enzyme catalyses ATP + H2O = ADP + phosphate + H(+). The RuvA-RuvB-RuvC complex processes Holliday junction (HJ) DNA during genetic recombination and DNA repair, while the RuvA-RuvB complex plays an important role in the rescue of blocked DNA replication forks via replication fork reversal (RFR). RuvA specifically binds to HJ cruciform DNA, conferring on it an open structure. The RuvB hexamer acts as an ATP-dependent pump, pulling dsDNA into and through the RuvAB complex. RuvB forms 2 homohexamers on either side of HJ DNA bound by 1 or 2 RuvA tetramers; 4 subunits per hexamer contact DNA at a time. Coordinated motions by a converter formed by DNA-disengaged RuvB subunits stimulates ATP hydrolysis and nucleotide exchange. Immobilization of the converter enables RuvB to convert the ATP-contained energy into a lever motion, pulling 2 nucleotides of DNA out of the RuvA tetramer per ATP hydrolyzed, thus driving DNA branch migration. The RuvB motors rotate together with the DNA substrate, which together with the progressing nucleotide cycle form the mechanistic basis for DNA recombination by continuous HJ branch migration. Branch migration allows RuvC to scan DNA until it finds its consensus sequence, where it cleaves and resolves cruciform DNA. This chain is Holliday junction branch migration complex subunit RuvB, found in Chlamydia pneumoniae (Chlamydophila pneumoniae).